A 284-amino-acid polypeptide reads, in one-letter code: D-tagatose-1,6-bisphosphate aldolase subunit GatY (284 aa).

The active-site Proton donor is the D82. Zn(2+)-binding residues include H83 and H180. G181 lines the dihydroxyacetone phosphate pocket. H208 lines the Zn(2+) pocket. Dihydroxyacetone phosphate is bound by residues G209–S211 and N230–T233.

It belongs to the class II fructose-bisphosphate aldolase family. TagBP aldolase GatY subfamily. In terms of assembly, forms a complex with GatZ. Zn(2+) is required as a cofactor.

The catalysed reaction is D-tagatofuranose 1,6-bisphosphate = D-glyceraldehyde 3-phosphate + dihydroxyacetone phosphate. It participates in carbohydrate metabolism; D-tagatose 6-phosphate degradation; D-glyceraldehyde 3-phosphate and glycerone phosphate from D-tagatose 6-phosphate: step 2/2. Functionally, catalytic subunit of the tagatose-1,6-bisphosphate aldolase GatYZ, which catalyzes the reversible aldol condensation of dihydroxyacetone phosphate (DHAP or glycerone-phosphate) with glyceraldehyde 3-phosphate (G3P) to produce tagatose 1,6-bisphosphate (TBP). Requires GatZ subunit for full activity and stability. Is involved in the catabolism of galactitol. This is D-tagatose-1,6-bisphosphate aldolase subunit GatY from Salmonella enteritidis PT4 (strain P125109).